The chain runs to 259 residues: Enolase-phosphatase E1 (259 aa).

2 residues coordinate Mg(2+): aspartate 16 and glutamate 18. Substrate is bound by residues 151-152 (SS) and lysine 185. Aspartate 210 contacts Mg(2+).

The protein belongs to the HAD-like hydrolase superfamily. MasA/MtnC family. Monomer. The cofactor is Mg(2+).

The protein localises to the cytoplasm. It localises to the nucleus. It carries out the reaction 5-methylsulfanyl-2,3-dioxopentyl phosphate + H2O = 1,2-dihydroxy-5-(methylsulfanyl)pent-1-en-3-one + phosphate. The protein operates within amino-acid biosynthesis; L-methionine biosynthesis via salvage pathway; L-methionine from S-methyl-5-thio-alpha-D-ribose 1-phosphate: step 3/6. It functions in the pathway amino-acid biosynthesis; L-methionine biosynthesis via salvage pathway; L-methionine from S-methyl-5-thio-alpha-D-ribose 1-phosphate: step 4/6. Bifunctional enzyme that catalyzes the enolization of 2,3-diketo-5-methylthiopentyl-1-phosphate (DK-MTP-1-P) into the intermediate 2-hydroxy-3-keto-5-methylthiopentenyl-1-phosphate (HK-MTPenyl-1-P), which is then dephosphorylated to form the acireductone 1,2-dihydroxy-3-keto-5-methylthiopentene (DHK-MTPene). In Xenopus tropicalis (Western clawed frog), this protein is Enolase-phosphatase E1 (enoph1).